We begin with the raw amino-acid sequence, 81 residues long: Photosystem I iron-sulfur center (81 aa).

4Fe-4S ferredoxin-type domains lie at 2-31 and 39-68; these read SHSV…MIPW and IASA…VRVY. Positions 11, 14, 17, 21, 48, 51, 54, and 58 each coordinate [4Fe-4S] cluster.

As to quaternary structure, the eukaryotic PSI reaction center is composed of at least 11 subunits. Requires [4Fe-4S] cluster as cofactor.

The protein localises to the plastid. It localises to the chloroplast thylakoid membrane. It carries out the reaction reduced [plastocyanin] + hnu + oxidized [2Fe-2S]-[ferredoxin] = oxidized [plastocyanin] + reduced [2Fe-2S]-[ferredoxin]. Apoprotein for the two 4Fe-4S centers FA and FB of photosystem I (PSI); essential for photochemical activity. FB is the terminal electron acceptor of PSI, donating electrons to ferredoxin. The C-terminus interacts with PsaA/B/D and helps assemble the protein into the PSI complex. Required for binding of PsaD and PsaE to PSI. PSI is a plastocyanin-ferredoxin oxidoreductase, converting photonic excitation into a charge separation, which transfers an electron from the donor P700 chlorophyll pair to the spectroscopically characterized acceptors A0, A1, FX, FA and FB in turn. The sequence is that of Photosystem I iron-sulfur center from Zea mays (Maize).